The sequence spans 194 residues: ATP synthase subunit 5, mitochondrial (194 aa).

As to quaternary structure, F-type ATP synthases have 2 components, the catalytic core F(1) and the membrane-embedded component F(0), linked together by a central stalk and a peripheral stalk. The central stalk, also called rotor shaft, is often seen as part of F(1). The peripheral stalk is seen as part of F(0). F(0) contains the membrane channel next to the rotor. F-type ATP synthases form dimers but each monomer functions independently in ATP generation. The dimer consists of 18 different polypeptides: ATP1 (subunit alpha, part of F(1), 3 molecules per monomer), ATP2 (subunit beta, part of F(1), 3 molecules per monomer), ATP3 (subunit gamma, part of the central stalk), ATP4 (subunit b, part of the peripheral stalk), ATP5/OSCP (subunit 5/OSCP, part of the peripheral stalk), ATP6 (subunit a, part of the peripheral stalk), ATP7 (subunit d, part of the peripheral stalk), ATP8 (subunit 8, part of the peripheral stalk), OLI1 (subunit c, part of the rotor, 10 molecules per monomer), ATP14 (subunit h, part of the peripheral stalk), ATP15 (subunit epsilon, part of the central stalk), ATP16 (subunit delta, part of the central stalk), ATP17 (subunit f, part of the peripheral stalk), ATP18 (subunit i/j, part of the peripheral stalk). Dimer-specific subunits are ATP19 (subunit k, at interface between monomers), ATP20 (subunit g, at interface between monomers), TIM11 (subunit e, at interface between monomers). Also contains subunit L.

Its subcellular location is the mitochondrion inner membrane. Mitochondrial membrane ATP synthase (F(1)F(0) ATP synthase or Complex V) produces ATP from ADP in the presence of a proton gradient across the membrane which is generated by electron transport complexes of the respiratory chain. F-type ATP synthases consist of two structural domains, F(1) - containing the extramembraneous catalytic core, and F(0) - containing the membrane proton channel, linked together by a central stalk and a peripheral stalk. During catalysis, ATP synthesis in the catalytic domain of F(1) is coupled via a rotary mechanism of the central stalk subunits to proton translocation. Part of the complex F(0) domain and the peripheral stalk, which acts as a stator to hold the catalytic alpha/ATP1(3)beta/ATP2(3) subcomplex and subunit a/ATP6 static relative to the rotary elements. This Pichia angusta (Yeast) protein is ATP synthase subunit 5, mitochondrial.